An 84-amino-acid polypeptide reads, in one-letter code: Putative defensin-like protein 139 (84 aa).

The N-terminal stretch at 1–28 (MEPSNQIFFYLRRSKLLSGLGEIRMAKG) is a signal peptide. 4 disulfides stabilise this stretch: Cys37–Cys81, Cys46–Cys65, Cys51–Cys75, and Cys55–Cys77.

This sequence belongs to the DEFL family.

It localises to the secreted. This chain is Putative defensin-like protein 139 (LCR7), found in Arabidopsis thaliana (Mouse-ear cress).